A 602-amino-acid chain; its full sequence is Aspartate--tRNA(Asp/Asn) ligase (602 aa).

Glu170 is an L-aspartate binding site. An aspartate region spans residues Gln194–Lys197. Arg216 contacts L-aspartate. Residues Arg216 to Glu218 and Gln225 contribute to the ATP site. His448 is a binding site for L-aspartate. An ATP-binding site is contributed by Glu482. Position 489 (Arg489) interacts with L-aspartate. Gly534–Arg537 contacts ATP. Residues Gly559 to Lys602 form a disordered region. Over residues Gln575–Gly589 the composition is skewed to basic and acidic residues. Low complexity predominate over residues Asp590–Lys602.

Belongs to the class-II aminoacyl-tRNA synthetase family. Type 1 subfamily. Homodimer.

It is found in the cytoplasm. It catalyses the reaction tRNA(Asx) + L-aspartate + ATP = L-aspartyl-tRNA(Asx) + AMP + diphosphate. In terms of biological role, aspartyl-tRNA synthetase with relaxed tRNA specificity since it is able to aspartylate not only its cognate tRNA(Asp) but also tRNA(Asn). Reaction proceeds in two steps: L-aspartate is first activated by ATP to form Asp-AMP and then transferred to the acceptor end of tRNA(Asp/Asn). This Rhodococcus jostii (strain RHA1) protein is Aspartate--tRNA(Asp/Asn) ligase.